Consider the following 193-residue polypeptide: Transcriptional regulator RamR (193 aa).

The HTH tetR-type domain occupies 7–66 (EDKKQALLEAATQAIAQSGIAASTAVIARNAGVAEGTLFRYFATKDELINTLYLHLKQDL). The H-T-H motif DNA-binding region spans 29-48 (STAVIARNAGVAEGTLFRYF).

Homodimer. May bind DNA either as a homodimer or as a pair of homodimers. Various chemicals reduce DNA-binding in vitro, including bile acids, such as cholic and chenodeoxycholic acids, and antimicrobial drugs, such as berberine, crystal violet, dequalinium, ethidium bromide and rhodamine 6G. Binds small regulatory RNA StyR3.

Its function is as follows. Transcriptional regulator. Represses the transcription of the transcriptional activator RamA and, thereby, leads to repression of the expression of the efflux pump subunits AcrA and AcrB, and TolC. Acts by binding directly to the promoter region of the ramA gene. Promoter binding may be inhibited partially by the small regulatory RNA StyR3, perhaps thereby ensuring a basal level of expression of RamA. The chain is Transcriptional regulator RamR from Salmonella typhimurium (strain LT2 / SGSC1412 / ATCC 700720).